The following is a 101-amino-acid chain: UPF0473 protein spr0177 (101 aa).

This sequence belongs to the UPF0473 family.

The protein is UPF0473 protein spr0177 of Streptococcus pneumoniae (strain ATCC BAA-255 / R6).